Reading from the N-terminus, the 864-residue chain is Coiled-coil and C2 domain-containing protein 1B (864 aa).

Positions 82–154 (QDCMTDMTGE…VNSSVAEIQH (73 aa)) are disordered. Acidic residues-rich tracts occupy residues 89–104 (TGEDDDDDLEEDEELL) and 111–129 (VGEEEEVEQSQPSDTEESE). Positions 91–118 (EDDDDDLEEDEELLAELQDVVGEEEEVE) form a coiled coil. A compositionally biased stretch (polar residues) spans 142-154 (EQQVNSSVAEIQH). Positions 162–209 (GMLQVLEERIGNYKEAISNAKLSNESAKARRYERGLKTLESMLSAARQ) form a coiled coil. Residues 218 to 249 (IPPPVACGKPAVSPTTDVPTTDTSKQGLGDLN) are disordered. Positions 229 to 241 (VSPTTDVPTTDTS) are enriched in low complexity. The stretch at 385–412 (VGSLLQALQQRMEKYKSAAQQAKSSGDD) forms a coiled coil. 2 disordered regions span residues 441–463 (AELPVPPGFPPLPGMEQTEEEGS) and 478–502 (AGEDVDDDEDECQAKPPGHPKPTQL). Positions 444 to 453 (PVPPGFPPLP) are enriched in pro residues. Coiled-coil stretches lie at residues 464 to 488 (VEKALEAAQKLAKTAGEDVDDDEDE) and 535 to 564 (PAVQEQLEFLEHRKKQYRKAALQAKQKNDL). Positions 685–820 (HFEDKTLKIV…ETQCEIREIV (136 aa)) constitute a C2 domain.

The protein belongs to the CC2D1 family.

In Xenopus laevis (African clawed frog), this protein is Coiled-coil and C2 domain-containing protein 1B (cc2d1b).